The chain runs to 430 residues: Tol-Pal system protein TolB (430 aa).

The first 21 residues, 1-21, serve as a signal peptide directing secretion; sequence MKQALRVAFGFLILWASVLHA.

It belongs to the TolB family. In terms of assembly, the Tol-Pal system is composed of five core proteins: the inner membrane proteins TolA, TolQ and TolR, the periplasmic protein TolB and the outer membrane protein Pal. They form a network linking the inner and outer membranes and the peptidoglycan layer.

It localises to the periplasm. Functionally, part of the Tol-Pal system, which plays a role in outer membrane invagination during cell division and is important for maintaining outer membrane integrity. TolB occupies a key intermediary position in the Tol-Pal system because it communicates directly with both membrane-embedded components, Pal in the outer membrane and TolA in the inner membrane. In Shigella boydii serotype 4 (strain Sb227), this protein is Tol-Pal system protein TolB.